We begin with the raw amino-acid sequence, 835 residues long: Beta-galactosidase (835 aa).

An N-terminal signal peptide occupies residues methionine 1–alanine 22. The active-site Proton donor is glutamate 180. Glutamate 249 (nucleophile) is an active-site residue. The 87-residue stretch at arginine 749 to serine 835 folds into the SUEL-type lectin domain.

Belongs to the glycosyl hydrolase 35 family.

It catalyses the reaction Hydrolysis of terminal non-reducing beta-D-galactose residues in beta-D-galactosides.. Involved in cell wall degradation. Degrades polysaccharides containing beta-(1--&gt;4)-linked galactans, acting as an exo-(1--&gt;4)-beta-D-galactanase. This Solanum lycopersicum (Tomato) protein is Beta-galactosidase.